We begin with the raw amino-acid sequence, 419 residues long: Acetyltransferase fsoF (419 aa).

N-linked (GlcNAc...) asparagine glycosylation is present at Asn-2. The next 2 helical transmembrane spans lie at 4–24 (TIIS…VVGF) and 62–82 (AFLG…AILS). A disordered region spans residues 89-114 (QSPTSSLGGLIPPTTRDTPKTQNNAT). Residues Asn-112 and Asn-169 are each glycosylated (N-linked (GlcNAc...) asparagine). Transmembrane regions (helical) follow at residues 230-250 (YWAI…VVAV), 314-334 (YVFM…SDVS), 337-357 (IPLG…GIML), and 386-406 (VSGP…WIYM).

The protein belongs to the wax synthase family.

The protein resides in the membrane. The enzyme catalyses 3-O-(beta-D-glucopyranosyl)-2alpha-hydroxyisomotiol + acetyl-CoA = 3-O-(beta-D-glucopyranosyl)-2alpha-acetoxyisomotiol + CoA. The catalysed reaction is 2-deacetylfuscoatroside + acetyl-CoA = fuscoatroside + CoA. The protein operates within secondary metabolite biosynthesis; terpenoid biosynthesis. Functionally, terpene cyclase-glycosyl transferase fusion protein; part of the gene cluster that mediates the biosynthesis of the enfumafungin-type antibiotic, fuscoatroside. Within the pathway, fsoF catalyzes the acetylation of C2-alpha-OH following the C2 hydroxylation by the cytochrome monooxygenase fsoD. The fuscoatroside biosynthesis is initiated by the cyclization of 2,3(S)-oxidosqualene through FsoA's terpene cyclase (TC) domain, leading to the formation of the fernane skeleton isomotiol, harboring a fernane triterpene skeleton with a C8-C9 double bond. Subsequently, C2-alpha-hydroxylation mediated by fsoD results in the production of 2-alpha-hydroxy-isomotiol, which is further acetylated by fsoF. The glycosyltransferase (GT) domain of FsoA may convert isomotiol, 2-alpha-hydroxy-isomotiol, and the acetylated derivative of 2-alpha-hydroxy-isomotiol into their corresponding glycosides 3-O-(beta-D-glucopyranosyl)-isomotiol, 3-O-(beta-D-glucopyranosyl)-2-alpha-hydroxy-isomotiol, and 3-O-(beta-D-glucopyranosyl)-2-alpha-acetoxy-isomotiol, which then undergo oxidative cleavage under the action of fsoE to form s 2-deacetoxy-fuscoatroside, 2-deacetyl-fuscoatroside, and fuscoatroside, respectively. Although hydroxylation followed by acetylation of 3-O-(beta-D-glucopyranosyl)-isomotiol and 2-deacetoxy-fuscoatroside by fsoD and fsoF could not be ruled out, this process is likely to occur with difficulty due to bulky steric hindrance caused by the presence of a glycan at C3 in these compounds. Interestingly, fsoE can also utilize the aglycones isomotiol and 2-alpha-hydroxy-isomotiol as substrates to generate 19-beta-hydroxy-isomotiol and 2-alpha,19-beta-dihydroxy-isomotiol, respectively. These reactions occur with lower efficiency. Finally, fsoE can further convert 2-alpha,19-beta-dihydroxy-isomotiol into 2-alpha-hydroxy-ismotiol-19-one and 2-alpha-hydroxy-ismotiol-19-one into 2-deacetyl-3-deglucopyranosyl-fuscoatroside. The polypeptide is Acetyltransferase fsoF (Humicola fuscoatra).